Here is an 89-residue protein sequence, read N- to C-terminus: Mu-like prophage FluMu DNA-binding protein Ner (89 aa).

Residues 57–76 constitute a DNA-binding region (H-T-H motif); sequence ERLVANAIGVPPEVIWAGRF.

The protein belongs to the ner transcriptional regulatory family.

Functionally, negative regulator of transcription starting from the Pe and Pc promoters of Mu. Also negatively regulates its own gene transcription. The polypeptide is Mu-like prophage FluMu DNA-binding protein Ner (nlp) (Haemophilus influenzae (strain ATCC 51907 / DSM 11121 / KW20 / Rd)).